We begin with the raw amino-acid sequence, 205 residues long: Protein GrpE (205 aa).

Positions 172-205 (KGSTGPGAPAEPAAAPNPYASNGADTGGSFDTKA) are disordered. The span at 177-195 (PGAPAEPAAAPNPYASNGA) shows a compositional bias: low complexity.

The protein belongs to the GrpE family. Homodimer.

It localises to the cytoplasm. Participates actively in the response to hyperosmotic and heat shock by preventing the aggregation of stress-denatured proteins, in association with DnaK and GrpE. It is the nucleotide exchange factor for DnaK and may function as a thermosensor. Unfolded proteins bind initially to DnaJ; upon interaction with the DnaJ-bound protein, DnaK hydrolyzes its bound ATP, resulting in the formation of a stable complex. GrpE releases ADP from DnaK; ATP binding to DnaK triggers the release of the substrate protein, thus completing the reaction cycle. Several rounds of ATP-dependent interactions between DnaJ, DnaK and GrpE are required for fully efficient folding. This Caulobacter sp. (strain K31) protein is Protein GrpE.